A 75-amino-acid chain; its full sequence is Small ribosomal subunit protein bS18 (75 aa).

The protein belongs to the bacterial ribosomal protein bS18 family. Part of the 30S ribosomal subunit. Forms a tight heterodimer with protein bS6.

Binds as a heterodimer with protein bS6 to the central domain of the 16S rRNA, where it helps stabilize the platform of the 30S subunit. This Desulforudis audaxviator (strain MP104C) protein is Small ribosomal subunit protein bS18.